Here is a 251-residue protein sequence, read N- to C-terminus: Flap endonuclease Xni (251 aa).

Residue D104 coordinates Mg(2+). The 90-residue stretch at 160-249 (VLPRQLPDYW…IDGNLQQLRL (90 aa)) folds into the 5'-3' exonuclease domain. The K(+) site is built by L171, A172, P180, V182, and I185. The tract at residues 184-189 (GIGPKS) is interaction with DNA.

Belongs to the Xni family. Mg(2+) serves as cofactor. K(+) is required as a cofactor.

Has flap endonuclease activity. During DNA replication, flap endonucleases cleave the 5'-overhanging flap structure that is generated by displacement synthesis when DNA polymerase encounters the 5'-end of a downstream Okazaki fragment. In Salmonella newport (strain SL254), this protein is Flap endonuclease Xni.